Here is a 437-residue protein sequence, read N- to C-terminus: tRNA(Ile)-lysidine synthase (437 aa).

22–27 (SGGLDS) is an ATP binding site.

Belongs to the tRNA(Ile)-lysidine synthase family.

The protein localises to the cytoplasm. It carries out the reaction cytidine(34) in tRNA(Ile2) + L-lysine + ATP = lysidine(34) in tRNA(Ile2) + AMP + diphosphate + H(+). Its function is as follows. Ligates lysine onto the cytidine present at position 34 of the AUA codon-specific tRNA(Ile) that contains the anticodon CAU, in an ATP-dependent manner. Cytidine is converted to lysidine, thus changing the amino acid specificity of the tRNA from methionine to isoleucine. The polypeptide is tRNA(Ile)-lysidine synthase (Xylella fastidiosa (strain Temecula1 / ATCC 700964)).